The following is a 318-amino-acid chain: Ribosomal RNA small subunit methyltransferase H (318 aa).

S-adenosyl-L-methionine contacts are provided by residues 38-40 (GGH), Asp58, Tyr86, Asp107, and Gln114.

It belongs to the methyltransferase superfamily. RsmH family.

The protein resides in the cytoplasm. It carries out the reaction cytidine(1402) in 16S rRNA + S-adenosyl-L-methionine = N(4)-methylcytidine(1402) in 16S rRNA + S-adenosyl-L-homocysteine + H(+). Its function is as follows. Specifically methylates the N4 position of cytidine in position 1402 (C1402) of 16S rRNA. The polypeptide is Ribosomal RNA small subunit methyltransferase H (Methylibium petroleiphilum (strain ATCC BAA-1232 / LMG 22953 / PM1)).